Here is a 122-residue protein sequence, read N- to C-terminus: Small ribosomal subunit protein uS13 (122 aa).

The tract at residues 99-122 is disordered; the sequence is RGQRTHTNARTRKGPAKAIAGKKK.

Belongs to the universal ribosomal protein uS13 family. As to quaternary structure, part of the 30S ribosomal subunit. Forms a loose heterodimer with protein S19. Forms two bridges to the 50S subunit in the 70S ribosome.

Located at the top of the head of the 30S subunit, it contacts several helices of the 16S rRNA. In the 70S ribosome it contacts the 23S rRNA (bridge B1a) and protein L5 of the 50S subunit (bridge B1b), connecting the 2 subunits; these bridges are implicated in subunit movement. Contacts the tRNAs in the A and P-sites. The sequence is that of Small ribosomal subunit protein uS13 from Sinorhizobium medicae (strain WSM419) (Ensifer medicae).